Consider the following 515-residue polypeptide: ATP synthase subunit alpha (515 aa).

Position 171–178 (171–178 (GDRQTGKT)) interacts with ATP.

The protein belongs to the ATPase alpha/beta chains family. F-type ATPases have 2 components, CF(1) - the catalytic core - and CF(0) - the membrane proton channel. CF(1) has five subunits: alpha(3), beta(3), gamma(1), delta(1), epsilon(1). CF(0) has three main subunits: a(1), b(2) and c(9-12). The alpha and beta chains form an alternating ring which encloses part of the gamma chain. CF(1) is attached to CF(0) by a central stalk formed by the gamma and epsilon chains, while a peripheral stalk is formed by the delta and b chains.

Its subcellular location is the cell membrane. It catalyses the reaction ATP + H2O + 4 H(+)(in) = ADP + phosphate + 5 H(+)(out). Produces ATP from ADP in the presence of a proton gradient across the membrane. The alpha chain is a regulatory subunit. The protein is ATP synthase subunit alpha of Stenotrophomonas maltophilia (strain K279a).